Here is a 107-residue protein sequence, read N- to C-terminus: UPF0473 protein LACR_0139 (107 aa).

Belongs to the UPF0473 family.

This chain is UPF0473 protein LACR_0139, found in Lactococcus lactis subsp. cremoris (strain SK11).